Here is a 192-residue protein sequence, read N- to C-terminus: dTTP/UTP pyrophosphatase (192 aa).

The Proton acceptor role is filled by Asp70.

It belongs to the Maf family. YhdE subfamily. Requires a divalent metal cation as cofactor.

The protein localises to the cytoplasm. The catalysed reaction is dTTP + H2O = dTMP + diphosphate + H(+). It catalyses the reaction UTP + H2O = UMP + diphosphate + H(+). Nucleoside triphosphate pyrophosphatase that hydrolyzes dTTP and UTP. May have a dual role in cell division arrest and in preventing the incorporation of modified nucleotides into cellular nucleic acids. The sequence is that of dTTP/UTP pyrophosphatase from Clostridium perfringens (strain SM101 / Type A).